The sequence spans 184 residues: Interferon alpha-1 (184 aa).

Residues 1 to 23 (MALPVSLLMALVVLSCHSICSLG) form the signal peptide. 2 disulfides stabilise this stretch: Cys24–Cys122 and Cys52–Cys162.

Belongs to the alpha/beta interferon family. As to quaternary structure, interacts with CR2.

It localises to the secreted. In terms of biological role, produced by macrophages, IFN-alpha have antiviral activities. Interferon stimulates the production of two enzymes: a protein kinase and an oligoadenylate synthetase. This chain is Interferon alpha-1, found in Equus caballus (Horse).